The following is a 111-amino-acid chain: MIWLTLVFASLLSVAGQLCQKQATCFATVNKRRKHIVLWLGLALACLGLAMVLWLLVLQNVPVGIAYPMLSLNFVWVTLAAVKLWHEPVSLRHWCGVAFIIGGIVILGSTV.

The Cytoplasmic portion of the chain corresponds to 1-35 (MIWLTLVFASLLSVAGQLCQKQATCFATVNKRRKH). The helical transmembrane segment at 36–56 (IVLWLGLALACLGLAMVLWLL) threads the bilayer. Positions 40 to 109 (LGLALACLGL…IIGGIVILGS (70 aa)) constitute an EamA domain. Residues 57-60 (VLQN) are Periplasmic-facing. A helical membrane pass occupies residues 61-81 (VPVGIAYPMLSLNFVWVTLAA). Residues 82-87 (VKLWHE) lie on the Cytoplasmic side of the membrane. A helical membrane pass occupies residues 88 to 108 (PVSLRHWCGVAFIIGGIVILG). Residues 109 to 111 (STV) are Periplasmic-facing.

This sequence belongs to the ArnE family. Heterodimer of ArnE and ArnF.

The protein resides in the cell inner membrane. Its pathway is bacterial outer membrane biogenesis; lipopolysaccharide biosynthesis. Functionally, translocates 4-amino-4-deoxy-L-arabinose-phosphoundecaprenol (alpha-L-Ara4N-phosphoundecaprenol) from the cytoplasmic to the periplasmic side of the inner membrane. In Escherichia coli O6:H1 (strain CFT073 / ATCC 700928 / UPEC), this protein is Probable 4-amino-4-deoxy-L-arabinose-phosphoundecaprenol flippase subunit ArnE.